The following is a 315-amino-acid chain: Porphobilinogen deaminase (315 aa).

Residue C238 is modified to S-(dipyrrolylmethanemethyl)cysteine.

Belongs to the HMBS family. In terms of assembly, monomer. Requires dipyrromethane as cofactor.

It carries out the reaction 4 porphobilinogen + H2O = hydroxymethylbilane + 4 NH4(+). The protein operates within porphyrin-containing compound metabolism; protoporphyrin-IX biosynthesis; coproporphyrinogen-III from 5-aminolevulinate: step 2/4. Functionally, tetrapolymerization of the monopyrrole PBG into the hydroxymethylbilane pre-uroporphyrinogen in several discrete steps. The polypeptide is Porphobilinogen deaminase (Albidiferax ferrireducens (strain ATCC BAA-621 / DSM 15236 / T118) (Rhodoferax ferrireducens)).